Reading from the N-terminus, the 362-residue chain is Cobalt-precorrin-5B C(1)-methyltransferase (362 aa).

Belongs to the CbiD family.

It carries out the reaction Co-precorrin-5B + S-adenosyl-L-methionine = Co-precorrin-6A + S-adenosyl-L-homocysteine. Its pathway is cofactor biosynthesis; adenosylcobalamin biosynthesis; cob(II)yrinate a,c-diamide from sirohydrochlorin (anaerobic route): step 6/10. Its function is as follows. Catalyzes the methylation of C-1 in cobalt-precorrin-5B to form cobalt-precorrin-6A. The chain is Cobalt-precorrin-5B C(1)-methyltransferase from Burkholderia ambifaria (strain MC40-6).